Reading from the N-terminus, the 122-residue chain is Large ribosomal subunit protein uL14 (122 aa).

Belongs to the universal ribosomal protein uL14 family. In terms of assembly, part of the 50S ribosomal subunit. Forms a cluster with proteins L3 and L19. In the 70S ribosome, L14 and L19 interact and together make contacts with the 16S rRNA in bridges B5 and B8.

Its function is as follows. Binds to 23S rRNA. Forms part of two intersubunit bridges in the 70S ribosome. The sequence is that of Large ribosomal subunit protein uL14 from Phenylobacterium zucineum (strain HLK1).